The following is a 380-amino-acid chain: Protein RecA (380 aa).

65 to 72 (GPESSGKT) serves as a coordination point for ATP. The tract at residues 329–380 (DATGEETSETDDQAKEAKDKGTAKNGSKGQSKSTKATPAETALDLGDQPTEK) is disordered. The span at 340 to 350 (DQAKEAKDKGT) shows a compositional bias: basic and acidic residues. Polar residues predominate over residues 352 to 364 (KNGSKGQSKSTKA).

The protein belongs to the RecA family.

Its subcellular location is the cytoplasm. Its function is as follows. Can catalyze the hydrolysis of ATP in the presence of single-stranded DNA, the ATP-dependent uptake of single-stranded DNA by duplex DNA, and the ATP-dependent hybridization of homologous single-stranded DNAs. It interacts with LexA causing its activation and leading to its autocatalytic cleavage. The chain is Protein RecA from Lactiplantibacillus plantarum (strain ATCC BAA-793 / NCIMB 8826 / WCFS1) (Lactobacillus plantarum).